The following is a 483-amino-acid chain: Regulatory protein ViaA (483 aa).

Belongs to the ViaA family. Homodimer. Interacts with RavA.

The protein resides in the cytoplasm. Its function is as follows. Component of the RavA-ViaA chaperone complex, which may act on the membrane to optimize the function of some of the respiratory chains. ViaA stimulates the ATPase activity of RavA. This chain is Regulatory protein ViaA, found in Enterobacter sp. (strain 638).